Reading from the N-terminus, the 213-residue chain is NAD(P)H-hydrate epimerase (213 aa).

One can recognise a YjeF N-terminal domain in the interval Met8–Lys210. A (6S)-NADPHX-binding site is contributed by Asn55–Asp59. Residues Asn56 and Asp122 each contribute to the K(+) site. (6S)-NADPHX is bound by residues Gly126–Glu132, Tyr137, and Asp155. Position 158 (Ser158) interacts with K(+).

It belongs to the NnrE/AIBP family. K(+) is required as a cofactor.

The enzyme catalyses (6R)-NADHX = (6S)-NADHX. It catalyses the reaction (6R)-NADPHX = (6S)-NADPHX. Catalyzes the epimerization of the S- and R-forms of NAD(P)HX, a damaged form of NAD(P)H that is a result of enzymatic or heat-dependent hydration. This is a prerequisite for the S-specific NAD(P)H-hydrate dehydratase to allow the repair of both epimers of NAD(P)HX. This chain is NAD(P)H-hydrate epimerase, found in Cenarchaeum symbiosum (strain A).